Here is a 43-residue protein sequence, read N- to C-terminus: uncharacterized protein (43 aa).

This is an uncharacterized protein from Schizosaccharomyces pombe (strain 972 / ATCC 24843) (Fission yeast).